The primary structure comprises 401 residues: Probable tRNA sulfurtransferase (401 aa).

The THUMP domain occupies 63–168 (TTAEQALSCL…EREAFLYGAR (106 aa)). ATP contacts are provided by residues 186-187 (LL), 211-212 (YF), Arg-268, Gly-290, and Gln-299.

The protein belongs to the ThiI family.

It is found in the cytoplasm. It carries out the reaction [ThiI sulfur-carrier protein]-S-sulfanyl-L-cysteine + a uridine in tRNA + 2 reduced [2Fe-2S]-[ferredoxin] + ATP + H(+) = [ThiI sulfur-carrier protein]-L-cysteine + a 4-thiouridine in tRNA + 2 oxidized [2Fe-2S]-[ferredoxin] + AMP + diphosphate. The enzyme catalyses [ThiS sulfur-carrier protein]-C-terminal Gly-Gly-AMP + S-sulfanyl-L-cysteinyl-[cysteine desulfurase] + AH2 = [ThiS sulfur-carrier protein]-C-terminal-Gly-aminoethanethioate + L-cysteinyl-[cysteine desulfurase] + A + AMP + 2 H(+). The protein operates within cofactor biosynthesis; thiamine diphosphate biosynthesis. Its function is as follows. Catalyzes the ATP-dependent transfer of a sulfur to tRNA to produce 4-thiouridine in position 8 of tRNAs, which functions as a near-UV photosensor. Also catalyzes the transfer of sulfur to the sulfur carrier protein ThiS, forming ThiS-thiocarboxylate. This is a step in the synthesis of thiazole, in the thiamine biosynthesis pathway. The sulfur is donated as persulfide by IscS. This Treponema pallidum subsp. pallidum (strain SS14) protein is Probable tRNA sulfurtransferase.